Here is a 239-residue protein sequence, read N- to C-terminus: Uridylate kinase (239 aa).

13-16 contacts ATP; the sequence is KLSG. Glycine 55 is a UMP binding site. 2 residues coordinate ATP: glycine 56 and arginine 60. UMP is bound by residues aspartate 75 and 136–143; that span reads TGNPFFTT. Residues threonine 163, asparagine 164, tyrosine 169, and aspartate 172 each contribute to the ATP site.

Belongs to the UMP kinase family. Homohexamer.

The protein localises to the cytoplasm. The enzyme catalyses UMP + ATP = UDP + ADP. Its pathway is pyrimidine metabolism; CTP biosynthesis via de novo pathway; UDP from UMP (UMPK route): step 1/1. Its activity is regulated as follows. Inhibited by UTP. Its function is as follows. Catalyzes the reversible phosphorylation of UMP to UDP. The protein is Uridylate kinase of Neisseria meningitidis serogroup A / serotype 4A (strain DSM 15465 / Z2491).